Here is a 114-residue protein sequence, read N- to C-terminus: T-cell leukemia/lymphoma protein 1A (114 aa).

The protein belongs to the TCL1 family. In terms of assembly, homodimer. Interacts with AKT1, AKT2 and AKT3 (via PH domain). Interacts with PNPT1; the interaction has no effect on PNPT1 exonuclease activity. In terms of tissue distribution, restricted in the T-cell lineage to immature thymocytes and activated peripheral lymphocytes. Preferentially expressed early in T- and B-lymphocyte differentiation.

The protein localises to the cytoplasm. It is found in the nucleus. It localises to the microsome. The protein resides in the endoplasmic reticulum. Functionally, enhances the phosphorylation and activation of AKT1, AKT2 and AKT3. Promotes nuclear translocation of AKT1. Enhances cell proliferation, stabilizes mitochondrial membrane potential and promotes cell survival. The protein is T-cell leukemia/lymphoma protein 1A (TCL1A) of Homo sapiens (Human).